Here is a 93-residue protein sequence, read N- to C-terminus: NADH-ubiquinone oxidoreductase chain 4L (93 aa).

3 helical membrane-spanning segments follow: residues 1–21 (MVWM…VIFR), 29–49 (LFVG…VFLM), and 54–74 (LILL…ALLV).

Belongs to the complex I subunit 4L family.

It is found in the mitochondrion membrane. It carries out the reaction a ubiquinone + NADH + 5 H(+)(in) = a ubiquinol + NAD(+) + 4 H(+)(out). In terms of biological role, core subunit of the mitochondrial membrane respiratory chain NADH dehydrogenase (Complex I) that is believed to belong to the minimal assembly required for catalysis. Complex I functions in the transfer of electrons from NADH to the respiratory chain. The immediate electron acceptor for the enzyme is believed to be ubiquinone. In Mytilus edulis (Blue mussel), this protein is NADH-ubiquinone oxidoreductase chain 4L (ND4L).